The chain runs to 297 residues: MENYQKVEKIGEGTYGVVYKARHKLSGRIVAMKKIRLEDESEGVPSTAIREISLLKEVNDENNRSNCVRLLDILHAESKLYLVFEFLDMDLKKYMDRISETGATSLDPRLVQKFTYQLVNGVNFCHSRRIIHRDLKPQNLLIDKEGNLKLADFGLARSFGVPLRNYTHEIVTLWYRAPEVLLGSRHYSTGVDIWSVGCIFAEMIRRSPLFPGDSEIDEIFKIFQVLGTPNEEVWPGVTLLQDYKSTFPRWKRMDLHKVVPNGEEDAIELLSAMLVYDPAHRISAKRALQQNYLRDFH.

Residues tyrosine 4–leucine 293 enclose the Protein kinase domain. ATP-binding positions include isoleucine 10 to valine 18 and lysine 33. Threonine 14 carries the phosphothreonine modification. Tyrosine 15 carries the phosphotyrosine modification. The active-site Proton acceptor is aspartate 134. Threonine 167 is modified (phosphothreonine).

Belongs to the protein kinase superfamily. CMGC Ser/Thr protein kinase family. CDC2/CDKX subfamily. As to quaternary structure, forms a stable but non-covalent complex with regulatory subunit suc1 and with a cyclin. Interacts with cyclin cdc13. Interacts with cyclin cig2. Interacts with cdc37.

It is found in the cytoplasm. The enzyme catalyses L-seryl-[protein] + ATP = O-phospho-L-seryl-[protein] + ADP + H(+). It catalyses the reaction L-threonyl-[protein] + ATP = O-phospho-L-threonyl-[protein] + ADP + H(+). With respect to regulation, phosphorylation at Thr-14 or Tyr-15 inactivates the enzyme, while phosphorylation at Thr-167 activates it. In terms of biological role, cyclin-dependent kinase that acts as a master regulator of the mitotic and meiotic cell cycles. Required to drive the G1-S and G2-M transitions, and initiation of premeiotic DNA replication and meiosis II. More than 200 substrates have been identified. Substrate specificity is in part regulated by the bound cyclin protein. When complexed with cyclin cig2, it drives the G1-S phase transition. When complexed with cyclin cdc13, it drives the G2-M transition and initiation of meiosis II. Its activity rises throughout the cell cycle and substrate specificity is further influenced by activity thresholds with more sensitive substrates phosphorylated earlier in the cell cycle than less sensitive substrates. Phosphorylates dis1 during metaphase to ensure proper microtubule dynamics and accurate chromosome segregation. Phosphorylates the repetitive C-terminus of the large subunit of RNA polymerase II rpb1. Inactivated by checkpoint signaling following detection of cellular damage, leading to cell cycle arrest to allow damage repair. Inactivated during G2 DNA damage checkpoint signaling. Inactivated in response to defective RNA splicing. The protein is Cyclin-dependent kinase 1 of Schizosaccharomyces pombe (strain 972 / ATCC 24843) (Fission yeast).